The primary structure comprises 357 residues: Peptide chain release factor 1 (357 aa).

Gln235 is subject to N5-methylglutamine. The tract at residues Lys285–Glu305 is disordered.

The protein belongs to the prokaryotic/mitochondrial release factor family. In terms of processing, methylated by PrmC. Methylation increases the termination efficiency of RF1.

Its subcellular location is the cytoplasm. Peptide chain release factor 1 directs the termination of translation in response to the peptide chain termination codons UAG and UAA. In Chlamydia pneumoniae (Chlamydophila pneumoniae), this protein is Peptide chain release factor 1 (prfA).